The primary structure comprises 585 residues: MAGUK p55 subfamily member 3 (585 aa).

L27 domains follow at residues 6 to 60 (EDSG…ERQS) and 61 to 118 (PTPV…FDPV). The 82-residue stretch at 137-218 (IVRLVKNKEP…SITLKIIPAT (82 aa)) folds into the PDZ domain. The SH3 domain maps to 226-296 (ESKVFMRALF…PSKQFQERRL (71 aa)). At Ser-307 the chain carries Phosphoserine. The region spanning 385-570 (SRLVVLIGSL…VCSQLRAVIE (186 aa)) is the Guanylate kinase-like domain. The tract at residues 510–530 (KRKTPPVSPDSEDPATPLDEQ) is disordered.

Belongs to the MAGUK family. As to quaternary structure, interacts with HTR2C; this interaction stabilizes the receptor at the plasma membrane and prevents the desensitization of the HTR2C receptor-mediated calcium response. Interacts with HTR2A. Interacts with HTR4. Interacts (via PDZ domain) with CADM1 (via C-terminus)Interacts (via PDZ domain) with CADM1; this interaction connects CADM1 with DLG1. Interacts (via Guanylate kinase-like domain) with PALS1. Interacts with DLG1 (via N-terminus); this interaction connects CADM1 with DLG1 and links CADM1 with the regulatory subunit of phosphoinositide-3-kinase (PI3K) by forming a multiprotein complex and participates in cell spreading.

It localises to the apical cell membrane. The protein localises to the cell membrane. Its subcellular location is the cell junction. The protein resides in the adherens junction. Its function is as follows. Participates in cell spreading through the phosphoinositide-3-kinase (PI3K) pathway by connecting CADM1 to DLG1 and the regulatory subunit of phosphoinositide-3-kinase (PI3K). Stabilizes HTR2C at the plasma membrane and prevents its desensitization. May participates in the maintenance of adherens junctions. This chain is MAGUK p55 subfamily member 3, found in Rattus norvegicus (Rat).